Reading from the N-terminus, the 392-residue chain is Copper-containing nitrite reductase (392 aa).

An N-terminal signal peptide occupies residues 1–18 (MKRQALAAMIASLFALAA). The N-palmitoyl cysteine moiety is linked to residue Cys-19. A lipid anchor (S-diacylglycerol cysteine) is attached at Cys-19. Residues 30–49 (ETPAASAEAASSAAQATAET) form a disordered region. 2 consecutive Plastocyanin-like domains span residues 101 to 195 (WTFD…ILVE) and 245 to 346 (GHVG…LKVE). Cu cation is bound by residues His-134, His-139, His-174, Cys-175, His-183, and Met-188. His-139 lines the substrate pocket. Position 280 (His-280) interacts with substrate. His-329 is a Cu cation binding site. The disordered stretch occupies residues 367–392 (GAASAPAASAPAASAPAASASEKSVY). 4 repeat units span residues 368 to 372 (AASAP), 373 to 377 (AASAP), 378 to 382 (AASAP), and 383 to 387 (AASAS). Residues 368-387 (AASAPAASAPAASAPAASAS) are 4 X 5 AA tandem repeats of A-A-S-A-P.

This sequence belongs to the multicopper oxidase family. In terms of assembly, homotrimer. The cofactor is Cu(+). Cu(2+) serves as cofactor. Post-translationally, palmitoylated.

Its subcellular location is the cell outer membrane. It catalyses the reaction nitric oxide + Fe(III)-[cytochrome c] + H2O = Fe(II)-[cytochrome c] + nitrite + 2 H(+). Functionally, catalyzes the reduction of nitrite to nitric oxide (NO), probably with azurin as electron donor. Essential for growth and survival in oxygen-depleted environments. Can also provide protection against killing by normal human sera. This chain is Copper-containing nitrite reductase (aniA), found in Neisseria gonorrhoeae.